Reading from the N-terminus, the 591-residue chain is Pentatricopeptide repeat-containing protein At3g47530 (591 aa).

PPR repeat units lie at residues 76-110 (TLSH…SSLP), 112-146 (NPLS…GFLS), 147-177 (DSLL…IPKR), 178-208 (DTVS…MKND), 216-250 (DGVT…GLSG), 251-281 (ALNL…MRER), 282-316 (NVVS…GISP), 317-351 (EEQT…EFKI), and 354-384 (NLHH…MEMK). Residues 389–464 (IWRTLLGACR…KPGCSAIELQ (76 aa)) form a type E motif region. The tract at residues 465–495 (GTVHEFIVDDVSHPRKEEIYKMLAEINQQLK) is type E(+) motif. The type DYW motif stretch occupies residues 496 to 591 (IAGYVAEITS…GGSCSCNDFW (96 aa)).

It belongs to the PPR family. PCMP-H subfamily.

In Arabidopsis thaliana (Mouse-ear cress), this protein is Pentatricopeptide repeat-containing protein At3g47530 (PCMP-H76).